A 596-amino-acid polypeptide reads, in one-letter code: Arginine--tRNA ligase (596 aa).

A 'HIGH' region motif is present at residues 135–145; that stretch reads ANPTGPIHIGG. The disordered stretch occupies residues 227-249; sequence PRVDGGADQDGNPLGEGDSEQRE.

Belongs to the class-I aminoacyl-tRNA synthetase family. As to quaternary structure, monomer.

Its subcellular location is the cytoplasm. The catalysed reaction is tRNA(Arg) + L-arginine + ATP = L-arginyl-tRNA(Arg) + AMP + diphosphate. In Bifidobacterium adolescentis (strain ATCC 15703 / DSM 20083 / NCTC 11814 / E194a), this protein is Arginine--tRNA ligase.